Here is a 702-residue protein sequence, read N- to C-terminus: Putative GMC-type oxidoreductase R135 (702 aa).

Residues 55 to 75 (LTGDIVIIGAGAAGSLLAHYL) traverse the membrane as a helical segment. 58-88 (DIVIIGAGAAGSLLAHYLARFSNMKIILLEA) provides a ligand contact to FAD. His628 is a catalytic residue.

It belongs to the GMC oxidoreductase family. FAD is required as a cofactor.

It is found in the virion. The protein resides in the host membrane. In Acanthamoeba polyphaga (Amoeba), this protein is Putative GMC-type oxidoreductase R135.